Reading from the N-terminus, the 287-residue chain is Kit ligand (287 aa).

Positions 1 to 25 (MKKAQTWIITCFCLQLLLLNPLVKT) are cleaved as a signal peptide. Residues 26-225 (QSSCGNPVTD…LGFISSSSLQ (200 aa)) are Extracellular-facing. Disulfide bonds link cysteine 29–cysteine 117 and cysteine 68–cysteine 167. N-linked (GlcNAc...) asparagine glycans are attached at residues asparagine 100, asparagine 106, asparagine 149, asparagine 178, asparagine 200, and asparagine 206. Residues 226–246 (GISIALTSLLSLLIGFILGVI) traverse the membrane as a helical segment. Topologically, residues 247 to 287 (YWKKTHPKSRPESNETTQCHGCQEENEISMLQQKEKEHLQV) are cytoplasmic.

The protein belongs to the SCF family. As to quaternary structure, homodimer, non-covalently linked. Post-translationally, a soluble form is produced by proteolytic processing of isoform 1 in the extracellular domain.

It localises to the cell membrane. It is found in the secreted. The protein localises to the cytoplasm. Its subcellular location is the cytoskeleton. The protein resides in the cell projection. It localises to the lamellipodium. It is found in the filopodium. Ligand for the receptor-type protein-tyrosine kinase KIT. Plays an essential role in the regulation of cell survival and proliferation, hematopoiesis, stem cell maintenance, gametogenesis, mast cell development, migration and function, and in melanogenesis. KITLG/SCF binding can activate several signaling pathways. Acts synergistically with other cytokines, probably interleukins. In Coturnix japonica (Japanese quail), this protein is Kit ligand (KITLG).